The primary structure comprises 328 residues: Formimidoylglutamase (328 aa).

Residues H133, D159, H161, D163, D253, and D255 each coordinate Mn(2+).

This sequence belongs to the arginase family. Mn(2+) serves as cofactor.

It catalyses the reaction N-formimidoyl-L-glutamate + H2O = formamide + L-glutamate. It participates in amino-acid degradation; L-histidine degradation into L-glutamate; L-glutamate from N-formimidoyl-L-glutamate (hydrolase route): step 1/1. Its function is as follows. Catalyzes the conversion of N-formimidoyl-L-glutamate to L-glutamate and formamide. This Streptococcus pyogenes serotype M28 (strain MGAS6180) protein is Formimidoylglutamase.